Consider the following 124-residue polypeptide: Large ribosomal subunit protein bL12 (124 aa).

This sequence belongs to the bacterial ribosomal protein bL12 family. In terms of assembly, homodimer. Part of the ribosomal stalk of the 50S ribosomal subunit. Forms a multimeric L10(L12)X complex, where L10 forms an elongated spine to which 2 to 4 L12 dimers bind in a sequential fashion. Binds GTP-bound translation factors.

Functionally, forms part of the ribosomal stalk which helps the ribosome interact with GTP-bound translation factors. Is thus essential for accurate translation. The chain is Large ribosomal subunit protein bL12 from Chlorobium chlorochromatii (strain CaD3).